A 52-amino-acid chain; its full sequence is Sperm protamine P1 (52 aa).

The protein belongs to the protamine P1 family. Cross-linked by interchain disulfide bonds around the DNA-helix. Testis.

It is found in the nucleus. Its subcellular location is the chromosome. Functionally, protamines substitute for histones in the chromatin of sperm during the haploid phase of spermatogenesis. They compact sperm DNA into a highly condensed, stable and inactive complex. In Alouatta seniculus (Red howler monkey), this protein is Sperm protamine P1 (PRM1).